Reading from the N-terminus, the 439-residue chain is GTPase Der (439 aa).

EngA-type G domains are found at residues 2–168 and 181–357; these read ATVL…EEKG and IKIA…SSYT. Residues 8-15, 55-59, 118-121, 187-194, 234-238, and 300-303 contribute to the GTP site; these read GKPNVGKS, DTCGV, NKTE, GRPNVGKS, DTAGL, and NKWD. Residues 358–439 form the KH-like domain; it reads TKVPSSALNS…PIFLKFKKSR (82 aa).

This sequence belongs to the TRAFAC class TrmE-Era-EngA-EngB-Septin-like GTPase superfamily. EngA (Der) GTPase family. As to quaternary structure, associates with the 50S ribosomal subunit.

Functionally, GTPase that plays an essential role in the late steps of ribosome biogenesis. The protein is GTPase Der of Thermotoga neapolitana (strain ATCC 49049 / DSM 4359 / NBRC 107923 / NS-E).